A 425-amino-acid chain; its full sequence is MHDIRLIRSEPENFDKALSRRGFEPVSKTILEMDGERRTLALELQTLQTKRNEVSRQIGQAMKQGEKDKAEEMKAEVSAIKEKMAALEGEEAALGDKLQRFLSTIPNLAAEDVPEGKDEQDNKEVFRWGEPRQFSFKPKEHADFAPALGLDFDTAAAMSGARFALMKGAMARLNRAIGQYMLDCQTEKNGFTEIAPPLLVRDHALFGTGQLPKFEEDLFHTTDDRWLIPTAEVCLTNIVRESILDEKALPLRFTALTPCFRAEAGAAGRDTRGLIRQHQFDKVEMVAITTPEQSTAEQMRMVECAEQILQNLKLPYRRVLLCTGDMGFSATRTYDLEVWLPGQNCYREISSISDCGAFQARRMNTRYRPEEGKGNAAVHTLNGSGLAVGRTLVAILENYQEEDGTVTIPEVLHPYMNGITKLEII.

230–232 (TAE) lines the L-serine pocket. Residue 261 to 263 (RAE) participates in ATP binding. Glu-284 is a binding site for L-serine. Position 348 to 351 (348 to 351 (EISS)) interacts with ATP. Ser-384 contacts L-serine.

This sequence belongs to the class-II aminoacyl-tRNA synthetase family. Type-1 seryl-tRNA synthetase subfamily. Homodimer. The tRNA molecule binds across the dimer.

The protein resides in the cytoplasm. The catalysed reaction is tRNA(Ser) + L-serine + ATP = L-seryl-tRNA(Ser) + AMP + diphosphate + H(+). It catalyses the reaction tRNA(Sec) + L-serine + ATP = L-seryl-tRNA(Sec) + AMP + diphosphate + H(+). Its pathway is aminoacyl-tRNA biosynthesis; selenocysteinyl-tRNA(Sec) biosynthesis; L-seryl-tRNA(Sec) from L-serine and tRNA(Sec): step 1/1. In terms of biological role, catalyzes the attachment of serine to tRNA(Ser). Is also able to aminoacylate tRNA(Sec) with serine, to form the misacylated tRNA L-seryl-tRNA(Sec), which will be further converted into selenocysteinyl-tRNA(Sec). This chain is Serine--tRNA ligase, found in Zymomonas mobilis subsp. mobilis (strain ATCC 31821 / ZM4 / CP4).